Here is a 205-residue protein sequence, read N- to C-terminus: MRDAAEQLLVDPVEAARRLLGATLTGRGVSGVIVEVEAYGGVPDGPWPDAAAHSYKGLRARNFVMFGPPGRLYTYRSHGIHVCANVSCGPDGTAAAVLLRAAALEDGTDVARGRRGELVHTAALARGPGNLCAAMGITMADNGIDLFDPDSPVTLRLHEPLTAVCGPRVGVSQAADRPWRLWLPGRPEVSAYRRSPRAPAPGTSD.

Belongs to the DNA glycosylase MPG family.

This Mycolicibacterium paratuberculosis (strain ATCC BAA-968 / K-10) (Mycobacterium paratuberculosis) protein is Putative 3-methyladenine DNA glycosylase.